Here is a 466-residue protein sequence, read N- to C-terminus: 3-isopropylmalate dehydratase large subunit (466 aa).

[4Fe-4S] cluster-binding residues include Cys347, Cys407, and Cys410.

This sequence belongs to the aconitase/IPM isomerase family. LeuC type 1 subfamily. In terms of assembly, heterodimer of LeuC and LeuD. The cofactor is [4Fe-4S] cluster.

The enzyme catalyses (2R,3S)-3-isopropylmalate = (2S)-2-isopropylmalate. It functions in the pathway amino-acid biosynthesis; L-leucine biosynthesis; L-leucine from 3-methyl-2-oxobutanoate: step 2/4. In terms of biological role, catalyzes the isomerization between 2-isopropylmalate and 3-isopropylmalate, via the formation of 2-isopropylmaleate. This is 3-isopropylmalate dehydratase large subunit from Shigella sonnei (strain Ss046).